The chain runs to 468 residues: Aldehyde dehydrogenase family 3 member B1 (468 aa).

N-acetylmethionine is present on methionine 1. 188–193 (GNTYVG) is an NAD(+) binding site. Active-site residues include glutamate 210 and cysteine 244. Residues cysteine 462 and cysteine 463 are each lipidated (S-palmitoyl cysteine). At cysteine 465 the chain carries Cysteine methyl ester. Cysteine 465 carries S-geranylgeranyl cysteine lipidation. A propeptide spans 466 to 468 (TLL) (removed in mature form).

The protein belongs to the aldehyde dehydrogenase family. Post-translationally, dually lipidated in the C-terminus; prenylation occurs prior to, and is a prerequisite for palmitoylation. It is also required for activity towards long-chain substrates.

It localises to the cell membrane. The enzyme catalyses an aldehyde + NAD(+) + H2O = a carboxylate + NADH + 2 H(+). It carries out the reaction a long-chain fatty aldehyde + NAD(+) + H2O = a long-chain fatty acid + NADH + 2 H(+). The catalysed reaction is a medium-chain fatty aldehyde + NAD(+) + H2O = a medium-chain fatty acid + NADH + 2 H(+). It catalyses the reaction octanal + NAD(+) + H2O = octanoate + NADH + 2 H(+). The enzyme catalyses nonanal + NAD(+) + H2O = nonanoate + NADH + 2 H(+). It carries out the reaction hexadecanoate + NADH + 2 H(+) = hexadecanal + NAD(+) + H2O. The catalysed reaction is (2E)-octenal + NAD(+) + H2O = (2E)-octenoate + NADH + 2 H(+). It catalyses the reaction (E)-non-2-enal + NAD(+) + H2O = (E)-non-2-enoate + NADH + 2 H(+). The enzyme catalyses (E)-4-hydroxynon-2-enal + NAD(+) + H2O = (E)-4-hydroxynon-2-enoate + NADH + 2 H(+). It carries out the reaction (2E)-hexadecenal + NAD(+) + H2O = (E)-hexadec-2-enoate + NADH + 2 H(+). The catalysed reaction is benzaldehyde + NAD(+) + H2O = benzoate + NADH + 2 H(+). It catalyses the reaction an aldehyde + NADP(+) + H2O = a carboxylate + NADPH + 2 H(+). The enzyme catalyses a medium-chain fatty aldehyde + NADP(+) + H2O = a medium-chain fatty acid + NADPH + 2 H(+). It carries out the reaction hexanal + NADP(+) + H2O = hexanoate + NADPH + 2 H(+). The catalysed reaction is octanal + NADP(+) + H2O = octanoate + NADPH + 2 H(+). It catalyses the reaction nonanal + NADP(+) + H2O = nonanoate + NADPH + 2 H(+). The enzyme catalyses (2E)-octenal + NADP(+) + H2O = (2E)-octenoate + NADPH + 2 H(+). It carries out the reaction (E)-non-2-enal + NADP(+) + H2O = (E)-non-2-enoate + NADPH + 2 H(+). The catalysed reaction is (E)-4-hydroxynon-2-enal + NADP(+) + H2O = (E)-4-hydroxynon-2-enoate + NADPH + 2 H(+). It catalyses the reaction benzaldehyde + NADP(+) + H2O = benzoate + NADPH + 2 H(+). It participates in alcohol metabolism; ethanol degradation; acetate from ethanol: step 2/2. Functionally, oxidizes medium and long chain saturated and unsaturated fatty aldehydes generated in the plasma membrane into non-toxic fatty acids. May have a protective role against the cytotoxicity induced by lipid peroxidation. Short-chain fatty aldehydes are not good substrates. Can use both NADP(+) and NAD(+) as electron acceptor in vitro, however in vivo preference will depend on their tissue levels. Low activity towards acetaldehyde and 3,4-dihydroxyphenylacetaldehyde. Able to metabolize aromatic aldehydes such as benzaldehyde to their acid form. The polypeptide is Aldehyde dehydrogenase family 3 member B1 (Aldh3b1) (Rattus norvegicus (Rat)).